A 391-amino-acid polypeptide reads, in one-letter code: S-adenosylmethionine synthase (391 aa).

His16 is an ATP binding site. A Mg(2+)-binding site is contributed by Asp18. K(+) is bound at residue Glu44. 2 residues coordinate L-methionine: Glu57 and Gln101. Residues 101-111 (QSADIAQGVDA) form a flexible loop region. ATP-binding positions include 166 to 168 (DAK), Asp244, 250 to 251 (RK), Ala267, and Lys271. Asp244 serves as a coordination point for L-methionine. Lys275 provides a ligand contact to L-methionine.

This sequence belongs to the AdoMet synthase family. As to quaternary structure, homotetramer; dimer of dimers. The cofactor is Mg(2+). K(+) is required as a cofactor.

Its subcellular location is the cytoplasm. It carries out the reaction L-methionine + ATP + H2O = S-adenosyl-L-methionine + phosphate + diphosphate. The protein operates within amino-acid biosynthesis; S-adenosyl-L-methionine biosynthesis; S-adenosyl-L-methionine from L-methionine: step 1/1. Catalyzes the formation of S-adenosylmethionine (AdoMet) from methionine and ATP. The overall synthetic reaction is composed of two sequential steps, AdoMet formation and the subsequent tripolyphosphate hydrolysis which occurs prior to release of AdoMet from the enzyme. The polypeptide is S-adenosylmethionine synthase (Zymomonas mobilis subsp. mobilis (strain ATCC 31821 / ZM4 / CP4)).